Consider the following 340-residue polypeptide: SH2 domain-containing adapter protein D (340 aa).

3 disordered regions span residues 1–77, 94–186, and 198–230; these read MAKW…PKHR, GGPG…QPWE, and VQFD…ERVD. Over residues 98 to 108 the composition is skewed to acidic residues; the sequence is EELEADTEYLD. Residues 171-186 are compositionally biased toward basic and acidic residues; the sequence is PQEDERPADEYDQPWE. The 96-residue stretch at 240–335 folds into the SH2 domain; sequence WFHGPLNRAD…AEHLALLYPV (96 aa).

In terms of processing, tyrosine phosphorylated by ABL.

Its function is as follows. May function as an adapter protein. In Homo sapiens (Human), this protein is SH2 domain-containing adapter protein D (SHD).